The sequence spans 210 residues: tRNA (guanine-N(7)-)-methyltransferase (210 aa).

S-adenosyl-L-methionine is bound by residues Glu36, Glu61, Asp90, and Asp112. Residue Asp112 is part of the active site. Substrate contacts are provided by residues Lys116, Asp148, and 188–191 (TEYE).

The protein belongs to the class I-like SAM-binding methyltransferase superfamily. TrmB family.

It catalyses the reaction guanosine(46) in tRNA + S-adenosyl-L-methionine = N(7)-methylguanosine(46) in tRNA + S-adenosyl-L-homocysteine. Its pathway is tRNA modification; N(7)-methylguanine-tRNA biosynthesis. In terms of biological role, catalyzes the formation of N(7)-methylguanine at position 46 (m7G46) in tRNA. The protein is tRNA (guanine-N(7)-)-methyltransferase of Mycoplasma pneumoniae (strain ATCC 29342 / M129 / Subtype 1) (Mycoplasmoides pneumoniae).